Consider the following 91-residue polypeptide: Small ribosomal subunit protein uS19 (91 aa).

It belongs to the universal ribosomal protein uS19 family.

Functionally, protein S19 forms a complex with S13 that binds strongly to the 16S ribosomal RNA. The sequence is that of Small ribosomal subunit protein uS19 from Marinobacter nauticus (strain ATCC 700491 / DSM 11845 / VT8) (Marinobacter aquaeolei).